We begin with the raw amino-acid sequence, 372 residues long: Peptidyl-prolyl cis-trans isomerase D (372 aa).

The PPIase cyclophilin-type domain occupies 10-173 (FFDIQIGQQQ…TDVTIAECGE (164 aa)). The tract at residues 174 to 193 (LTGEDYDNADKQTPDATGDP) is disordered. TPR repeat units lie at residues 215–248 (ASELKNFGNTAFKNGNIALGLEKYQKGLRYLNEF), 268–304 (FTLHSNSSLLANKLGQFKNGKTWATYALDVADAASAK), and 309–342 (AKVYYRRAVAESGLKEEDEALKDLEQASTLAPSD).

Belongs to the cyclophilin-type PPIase family. PPIase D subfamily.

Its subcellular location is the cytoplasm. The catalysed reaction is [protein]-peptidylproline (omega=180) = [protein]-peptidylproline (omega=0). In terms of biological role, PPIases accelerate the folding of proteins. It catalyzes the cis-trans isomerization of proline imidic peptide bonds in oligopeptides. This chain is Peptidyl-prolyl cis-trans isomerase D (cpr6), found in Emericella nidulans (strain FGSC A4 / ATCC 38163 / CBS 112.46 / NRRL 194 / M139) (Aspergillus nidulans).